We begin with the raw amino-acid sequence, 274 residues long: Shikimate dehydrogenase (NADP(+)) (274 aa).

Shikimate is bound by residues 20 to 22 (SKS) and Thr68. Lys72 functions as the Proton acceptor in the catalytic mechanism. Asp84 contacts NADP(+). Positions 93 and 109 each coordinate shikimate. Residues 131-135 (GAGGA) and Leu217 contribute to the NADP(+) site. Residue Tyr219 coordinates shikimate. Gly240 contacts NADP(+).

Belongs to the shikimate dehydrogenase family. As to quaternary structure, homodimer.

The enzyme catalyses shikimate + NADP(+) = 3-dehydroshikimate + NADPH + H(+). It functions in the pathway metabolic intermediate biosynthesis; chorismate biosynthesis; chorismate from D-erythrose 4-phosphate and phosphoenolpyruvate: step 4/7. Functionally, involved in the biosynthesis of the chorismate, which leads to the biosynthesis of aromatic amino acids. Catalyzes the reversible NADPH linked reduction of 3-dehydroshikimate (DHSA) to yield shikimate (SA). In Sphingopyxis alaskensis (strain DSM 13593 / LMG 18877 / RB2256) (Sphingomonas alaskensis), this protein is Shikimate dehydrogenase (NADP(+)).